The chain runs to 765 residues: Periplasmic beta-glucosidase (765 aa).

The first 20 residues, 1–20 (MKWLCSVGIAVSLALQPALA), serve as a signal peptide directing secretion. Residue aspartate 287 is part of the active site.

The protein belongs to the glycosyl hydrolase 3 family.

It is found in the periplasm. It catalyses the reaction Hydrolysis of terminal, non-reducing beta-D-glucosyl residues with release of beta-D-glucose.. The sequence is that of Periplasmic beta-glucosidase (bglX) from Escherichia coli (strain K12).